Here is a 351-residue protein sequence, read N- to C-terminus: Porphobilinogen deaminase (351 aa).

S-(dipyrrolylmethanemethyl)cysteine is present on Cys-242.

This sequence belongs to the HMBS family. As to quaternary structure, monomer. The cofactor is dipyrromethane.

The catalysed reaction is 4 porphobilinogen + H2O = hydroxymethylbilane + 4 NH4(+). Its pathway is porphyrin-containing compound metabolism; protoporphyrin-IX biosynthesis; coproporphyrinogen-III from 5-aminolevulinate: step 2/4. In terms of biological role, tetrapolymerization of the monopyrrole PBG into the hydroxymethylbilane pre-uroporphyrinogen in several discrete steps. This is Porphobilinogen deaminase from Rickettsia peacockii (strain Rustic).